Consider the following 317-residue polypeptide: MYTKIIGTGSYLPEQVRTNADLEKMVETSDEWIVTRTGIRERHIAAPNETVATMGFTAANRAIEMAGIDKDQIGLIVVATTSATHAFPSAACQIQSMLGIKGCPAFDVAAACAGFTYALSIADQYVKSGVVKHALVVGSDVLARTCDPGDRGTIIIFGDGAGAAVLSASEEPGIISTHLHADGRYGELLTLPNADRVNPDNPIYLTMAGNEVFKVAVTELAHIVDETLAANNLDRSELDWLVPHQANLRIISATAKKLGMSMDNVVVTLDRHGNTSAASVPCALDEAVRDGRIKAGQLVLLEAFGGGFTWGSALIRF.

Catalysis depends on residues Cys-112 and His-244. The segment at 245–249 (QANLR) is ACP-binding. Asn-274 is a catalytic residue.

It belongs to the thiolase-like superfamily. FabH family. As to quaternary structure, homodimer.

It is found in the cytoplasm. The catalysed reaction is malonyl-[ACP] + acetyl-CoA + H(+) = 3-oxobutanoyl-[ACP] + CO2 + CoA. It participates in lipid metabolism; fatty acid biosynthesis. In terms of biological role, catalyzes the condensation reaction of fatty acid synthesis by the addition to an acyl acceptor of two carbons from malonyl-ACP. Catalyzes the first condensation reaction which initiates fatty acid synthesis and may therefore play a role in governing the total rate of fatty acid production. Possesses both acetoacetyl-ACP synthase and acetyl transacylase activities. Its substrate specificity determines the biosynthesis of branched-chain and/or straight-chain of fatty acids. This Salmonella typhi protein is Beta-ketoacyl-[acyl-carrier-protein] synthase III.